The chain runs to 343 residues: Protein RecA (343 aa).

66–73 is an ATP binding site; the sequence is GPESSGKT.

Belongs to the RecA family.

The protein localises to the cytoplasm. Can catalyze the hydrolysis of ATP in the presence of single-stranded DNA, the ATP-dependent uptake of single-stranded DNA by duplex DNA, and the ATP-dependent hybridization of homologous single-stranded DNAs. It interacts with LexA causing its activation and leading to its autocatalytic cleavage. The protein is Protein RecA of Rickettsia massiliae (strain Mtu5).